Consider the following 193-residue polypeptide: Peptidyl-tRNA hydrolase (193 aa).

Position 17 (H17) interacts with tRNA. H22 acts as the Proton acceptor in catalysis. 3 residues coordinate tRNA: F68, N70, and N116.

The protein belongs to the PTH family. Monomer.

The protein resides in the cytoplasm. The enzyme catalyses an N-acyl-L-alpha-aminoacyl-tRNA + H2O = an N-acyl-L-amino acid + a tRNA + H(+). Functionally, hydrolyzes ribosome-free peptidyl-tRNAs (with 1 or more amino acids incorporated), which drop off the ribosome during protein synthesis, or as a result of ribosome stalling. Catalyzes the release of premature peptidyl moieties from peptidyl-tRNA molecules trapped in stalled 50S ribosomal subunits, and thus maintains levels of free tRNAs and 50S ribosomes. The polypeptide is Peptidyl-tRNA hydrolase (Xanthomonas campestris pv. campestris (strain ATCC 33913 / DSM 3586 / NCPPB 528 / LMG 568 / P 25)).